Reading from the N-terminus, the 272-residue chain is Ingression protein fic1 (272 aa).

In terms of domain architecture, C2 spans M1 to Y107. The tract at residues V155 to S187 is disordered. A compositionally biased stretch (basic residues) spans K158–P170.

It belongs to the INN1/fic1 family. As to quaternary structure, interacts with cdc15 and imp2.

It is found in the cytoplasm. The protein localises to the nucleus. Functionally, involved in the ingression of the plasma membrane during cytokinesis, leading to the separation of the daughter cells. Unlike its S.cerevisiae ortholog INN1, it does not play an essential role, probably because the actinomyosin ring is connected to the cell cortex by many more proteins. The sequence is that of Ingression protein fic1 (fic1) from Schizosaccharomyces pombe (strain 972 / ATCC 24843) (Fission yeast).